A 266-amino-acid chain; its full sequence is MEEAEYESVLCVKPDVHVYRIPPRATNRGYRAAEWQLDQPSWSGRLRITAKGQVAYIKLEDRTSGELFAQAPVDQFPGTAVESVTDSSRYFVIRIEDGNGRRAFIGIGFGDRGDAFDFNVALQDHFKWVKQQCEFAKQAQNPDQGPKLDLSFKEGQTIKLNIASMKKKDGAAGTPRARPTSTGGLSLLPPPPGAKTAALAPLSGEHLSVGGSVVQPAVSPSSGGATVSWPQPKPATTATADIWGDFTKSTGSTSSQTQPGAGWVQF.

Disordered stretches follow at residues 164–191 and 244–266; these read SMKK…LPPP and GDFT…WVQF. At serine 181 the chain carries Phosphoserine. Residues 243 to 246 carry the WXXF motif 1 motif; it reads WGDF. The segment covering 247 to 258 has biased composition (low complexity); the sequence is TKSTGSTSSQTQ. A WXXF motif 2 motif is present at residues 263-266; it reads WVQF.

It belongs to the NECAP family. As to quaternary structure, interacts with AP1G1 and AP2A1 components of the adapter protein complexes AP-1 and AP-2. Interacts with the GAE domain proteins GGA1, GGA2 and GGA3.

The protein resides in the cytoplasmic vesicle. Its subcellular location is the clathrin-coated vesicle membrane. It localises to the cell membrane. Its function is as follows. Involved in endocytosis. The polypeptide is Adaptin ear-binding coat-associated protein 2 (NECAP2) (Bos taurus (Bovine)).